We begin with the raw amino-acid sequence, 224 residues long: 25 kDa integral membrane protein (224 aa).

Residues 1–12 (MKLSFTKVSLTN) are Cytoplasmic-facing. A helical membrane pass occupies residues 13-33 (ILILFNCLFIIFSMIVLTFGV). The Extracellular segment spans residues 34–52 (IPQIYLLKFANILHGVRPS). A helical transmembrane segment spans residues 53 to 73 (IFPIVCFTGSFVIIVACVGII). Over 74 to 80 (GLMKGGK) the chain is Cytoplasmic. A helical transmembrane segment spans residues 81 to 101 (CLLTMHIIALIIATIIDISTA). The Extracellular portion of the chain corresponds to 102 to 189 (TLSAIKQNEF…LNKYVRYYID (88 aa)). N-linked (GlcNAc...) asparagine glycosylation occurs at Asn-120. A helical membrane pass occupies residues 190–210 (ILIYLCFIFGFIKLIYSLFTF). Over 211 to 224 (TQRQRIFSEKTPVA) the chain is Cytoplasmic.

This sequence belongs to the tetraspanin (TM4SF) family.

The protein resides in the membrane. In Schistosoma japonicum (Blood fluke), this protein is 25 kDa integral membrane protein.